A 482-amino-acid chain; its full sequence is BEL1-like homeodomain protein 7 (482 aa).

Positions S118–V134 are SR/KY domain. The tract at residues E167 to I238 is BELL domain. The segment at residues T285–M347 is a DNA-binding region (homeobox). Residues D358–R401 are disordered. The segment covering N363 to R401 has biased composition (polar residues).

This sequence belongs to the TALE/BELL homeobox family. May form heterodimeric complexes with TALE/KNOX proteins.

The protein resides in the nucleus. The polypeptide is BEL1-like homeodomain protein 7 (BLH7) (Arabidopsis thaliana (Mouse-ear cress)).